The chain runs to 193 residues: uncharacterized protein (193 aa).

This is an uncharacterized protein from Bacillus subtilis (strain 168).